The chain runs to 463 residues: Asparagine--tRNA ligase (463 aa).

The protein belongs to the class-II aminoacyl-tRNA synthetase family. Homodimer.

Its subcellular location is the cytoplasm. The enzyme catalyses tRNA(Asn) + L-asparagine + ATP = L-asparaginyl-tRNA(Asn) + AMP + diphosphate + H(+). This Clostridium tetani (strain Massachusetts / E88) protein is Asparagine--tRNA ligase.